Consider the following 522-residue polypeptide: tRNA-2-methylthio-N(6)-dimethylallyladenosine synthase (522 aa).

Residues 1–26 (MSLTIPSPASGTSTSATTDTAPAAAP) show a composition bias toward low complexity. The tract at residues 1–27 (MSLTIPSPASGTSTSATTDTAPAAAPQ) is disordered. Positions 28-143 (RTYQVRTFGC…LPALLDRARH (116 aa)) constitute an MTTase N-terminal domain. 6 residues coordinate [4Fe-4S] cluster: C37, C72, C106, C180, C184, and C187. The Radical SAM core domain maps to 166 to 396 (RDSVYSGWVS…TALQDRIAAE (231 aa)). The region spanning 399–469 (ARQLGRRVEV…AFHLVADPAS (71 aa)) is the TRAM domain. A disordered region spans residues 481–522 (GDAWDRSQADSCGAPVAGGGAGSNGGKGGVSLGMPALPVRRS). A compositionally biased stretch (gly residues) spans 496 to 511 (VAGGGAGSNGGKGGVS).

This sequence belongs to the methylthiotransferase family. MiaB subfamily. Monomer. [4Fe-4S] cluster is required as a cofactor.

It localises to the cytoplasm. It carries out the reaction N(6)-dimethylallyladenosine(37) in tRNA + (sulfur carrier)-SH + AH2 + 2 S-adenosyl-L-methionine = 2-methylsulfanyl-N(6)-dimethylallyladenosine(37) in tRNA + (sulfur carrier)-H + 5'-deoxyadenosine + L-methionine + A + S-adenosyl-L-homocysteine + 2 H(+). In terms of biological role, catalyzes the methylthiolation of N6-(dimethylallyl)adenosine (i(6)A), leading to the formation of 2-methylthio-N6-(dimethylallyl)adenosine (ms(2)i(6)A) at position 37 in tRNAs that read codons beginning with uridine. This chain is tRNA-2-methylthio-N(6)-dimethylallyladenosine synthase, found in Arthrobacter sp. (strain FB24).